Here is a 298-residue protein sequence, read N- to C-terminus: MTKQTEYKRKPEWLKIKLNTNENYTGLKKMMRSKNLHTVCEEAKCPNIHECWAVRKTATFMILGAVCTRACRFCAVKTGLPTELDLQEPERVADSVVQMGLKHVVITAVARDDLKDGGAAVFAETVRAVRRKNPFTSIEVLPSDMGGVEENLKMLMDAKPDILNHNIETVRRLSDRVRARAKYDRSLEFLRRAKEMQPDIPTKSSIMVGLGETREDLIEAMDDLRANNVDILTLGQYLQPSKKHLPVLKYYPPAEFAELKEIALSKGFSHCEAGPLVRSSYHADEQVRSAKENTAEAK.

The [4Fe-4S] cluster site is built by Cys-40, Cys-45, Cys-51, Cys-67, Cys-71, Cys-74, and Ser-280. A Radical SAM core domain is found at 53–269 (AVRKTATFMI…KEIALSKGFS (217 aa)).

This sequence belongs to the radical SAM superfamily. Lipoyl synthase family. Requires [4Fe-4S] cluster as cofactor.

It localises to the cytoplasm. It catalyses the reaction [[Fe-S] cluster scaffold protein carrying a second [4Fe-4S](2+) cluster] + N(6)-octanoyl-L-lysyl-[protein] + 2 oxidized [2Fe-2S]-[ferredoxin] + 2 S-adenosyl-L-methionine + 4 H(+) = [[Fe-S] cluster scaffold protein] + N(6)-[(R)-dihydrolipoyl]-L-lysyl-[protein] + 4 Fe(3+) + 2 hydrogen sulfide + 2 5'-deoxyadenosine + 2 L-methionine + 2 reduced [2Fe-2S]-[ferredoxin]. Its pathway is protein modification; protein lipoylation via endogenous pathway; protein N(6)-(lipoyl)lysine from octanoyl-[acyl-carrier-protein]. In terms of biological role, catalyzes the radical-mediated insertion of two sulfur atoms into the C-6 and C-8 positions of the octanoyl moiety bound to the lipoyl domains of lipoate-dependent enzymes, thereby converting the octanoylated domains into lipoylated derivatives. This is Lipoyl synthase from Bacillus cereus (strain ATCC 10987 / NRS 248).